The sequence spans 244 residues: 2,5-diamino-6-ribosylamino-4(3H)-pyrimidinone 5'-phosphate reductase (244 aa).

NADP(+) contacts are provided by residues Thr79, Asp83, Val159, and 182–186; that span reads GANVI.

It belongs to the HTP reductase family. As to quaternary structure, homodimer.

The catalysed reaction is 2,5-diamino-6-(1-D-ribitylamino)pyrimidin-4(3H)-one 5'-phosphate + NADP(+) = 2,5-diamino-6-(1-D-ribosylamino)pyrimidin-4(3H)-one 5'-phosphate + NADPH + H(+). It catalyses the reaction 2,5-diamino-6-(1-D-ribitylamino)pyrimidin-4(3H)-one 5'-phosphate + NAD(+) = 2,5-diamino-6-(1-D-ribosylamino)pyrimidin-4(3H)-one 5'-phosphate + NADH + H(+). The protein operates within cofactor biosynthesis; riboflavin biosynthesis. In terms of biological role, catalyzes an early step in riboflavin biosynthesis, the NADPH-dependent reduction of the ribose side chain of 2,5-diamino-6-ribosylamino-4(3H)-pyrimidinone 5'-phosphate, yielding 2,5-diamino-6-ribitylamino-4(3H)-pyrimidinone 5'-phosphate. The protein is 2,5-diamino-6-ribosylamino-4(3H)-pyrimidinone 5'-phosphate reductase (RIB7) of Saccharomyces cerevisiae (strain ATCC 204508 / S288c) (Baker's yeast).